A 141-amino-acid chain; its full sequence is Photosystem I reaction center subunit IV A, chloroplastic (141 aa).

A chloroplast-targeting transit peptide spans Met-1–Arg-49. The segment covering Pro-57 to Ala-73 has biased composition (low complexity). Residues Pro-57 to Gly-83 form a disordered region.

It belongs to the PsaE family. 2 isoforms exists (ratio 1:1). With or without the N-terminal alanine.

The protein localises to the plastid. It localises to the chloroplast thylakoid membrane. Stabilizes the interaction between PsaC and the PSI core, assists the docking of the ferredoxin to PSI and interacts with ferredoxin-NADP oxidoreductase. The sequence is that of Photosystem I reaction center subunit IV A, chloroplastic (PSAEA) from Nicotiana sylvestris (Wood tobacco).